A 377-amino-acid polypeptide reads, in one-letter code: Chaperone protein DnaJ (377 aa).

Residues 5 to 70 (DYYEVLGLQK…QKRAAYDQYG (66 aa)) enclose the J domain. The CR-type zinc finger occupies 134 to 212 (GCKKDIRLST…CHGDGRVQKA (79 aa)). Zn(2+) contacts are provided by Cys-147, Cys-150, Cys-164, Cys-167, Cys-186, Cys-189, Cys-200, and Cys-203. CXXCXGXG motif repeat units follow at residues 147–154 (CDNCHGTG), 164–171 (CPHCHGAG), 186–193 (CPSCHGTG), and 200–207 (CHSCHGDG).

Belongs to the DnaJ family. As to quaternary structure, homodimer. Requires Zn(2+) as cofactor.

It localises to the cytoplasm. Participates actively in the response to hyperosmotic and heat shock by preventing the aggregation of stress-denatured proteins and by disaggregating proteins, also in an autonomous, DnaK-independent fashion. Unfolded proteins bind initially to DnaJ; upon interaction with the DnaJ-bound protein, DnaK hydrolyzes its bound ATP, resulting in the formation of a stable complex. GrpE releases ADP from DnaK; ATP binding to DnaK triggers the release of the substrate protein, thus completing the reaction cycle. Several rounds of ATP-dependent interactions between DnaJ, DnaK and GrpE are required for fully efficient folding. Also involved, together with DnaK and GrpE, in the DNA replication of plasmids through activation of initiation proteins. This is Chaperone protein DnaJ from Haemophilus ducreyi (strain 35000HP / ATCC 700724).